Here is a 399-residue protein sequence, read N- to C-terminus: S-adenosylmethionine synthase (399 aa).

His17 contributes to the ATP binding site. Asp19 serves as a coordination point for Mg(2+). Residue Glu45 participates in K(+) binding. Residues Glu58 and Gln101 each coordinate L-methionine. Residues 101-111 form a flexible loop region; it reads QSADIAMGVDQ. Residues 177–179, 244–245, Asp253, 259–260, Ala276, and Lys280 each bind ATP; these read DGK, RF, and RK. Asp253 is an L-methionine binding site. Lys284 is a binding site for L-methionine.

The protein belongs to the AdoMet synthase family. In terms of assembly, homotetramer; dimer of dimers. Mg(2+) serves as cofactor. It depends on K(+) as a cofactor.

It is found in the cytoplasm. The catalysed reaction is L-methionine + ATP + H2O = S-adenosyl-L-methionine + phosphate + diphosphate. The protein operates within amino-acid biosynthesis; S-adenosyl-L-methionine biosynthesis; S-adenosyl-L-methionine from L-methionine: step 1/1. Functionally, catalyzes the formation of S-adenosylmethionine (AdoMet) from methionine and ATP. The overall synthetic reaction is composed of two sequential steps, AdoMet formation and the subsequent tripolyphosphate hydrolysis which occurs prior to release of AdoMet from the enzyme. In Bacillus cereus (strain G9842), this protein is S-adenosylmethionine synthase.